The chain runs to 514 residues: Histidine ammonia-lyase (514 aa).

Residues 143-145 (CSG) constitute a cross-link (5-imidazolinone (Cys-Gly)). The residue at position 144 (S144) is a 2,3-didehydroalanine (Ser).

This sequence belongs to the PAL/histidase family. Contains an active site 4-methylidene-imidazol-5-one (MIO), which is formed autocatalytically by cyclization and dehydration of residues Cys-Ser-Gly.

The protein localises to the cytoplasm. It carries out the reaction L-histidine = trans-urocanate + NH4(+). It participates in amino-acid degradation; L-histidine degradation into L-glutamate; N-formimidoyl-L-glutamate from L-histidine: step 1/3. The chain is Histidine ammonia-lyase (hutH) from Streptomyces griseus.